A 484-amino-acid polypeptide reads, in one-letter code: MEKKKLTTAAGAPVVDNNNVITAGPRGPMLLQDVWFLEKLAHFDREVIPERRMHAKGSGAFGTFTVTHDITKYTRAKIFSEVGKKTEMFARFSTVAGERGAADAERDIRGFALKFYTEEGNWDMVGNNTPVFYLRDPLKFPDLNHIVKRDPRTNMRNMAYKWDFFSHLPESLHQLTIDMSDRGLPLSYRFVHGFGSHTYSFINKDNERFWVKFHFRCQQGIKNLMDDEAEALVGKDRESSQRDLFEAIERGDYPRWKLQIQIMPEKEASTVPYNPFDLTKVWPHADYPLMDVGYFELNRNPDNYFSDVEQAAFSPANIVPGISFSPDKMLQGRLFSYGDAHRYRLGVNHHQIPVNAPKCPFHNYHRDGAMRVDGNSGNGITYEPNSGGVFQEQPDFKEPPLSIEGAADHWNHREDEDYFSQPRALYELLSDDEHQRMFARIAGELSQASKETQQRQIDLFTKVHPEYGAGVEKAIKVLEGKDAK.

Methionine 53 is modified (methionine sulfone). Catalysis depends on residues histidine 54 and asparagine 127. Tyrosine 337 serves as a coordination point for heme.

In terms of assembly, homotetramer. Requires heme as cofactor. NADP(+) serves as cofactor.

It localises to the cytoplasm. It catalyses the reaction 2 H2O2 = O2 + 2 H2O. Its function is as follows. Decomposes hydrogen peroxide into water and oxygen; serves to protect cells from the toxic effects of hydrogen peroxide. The polypeptide is Catalase (katA) (Proteus mirabilis).